A 64-amino-acid polypeptide reads, in one-letter code: Large ribosomal subunit protein bL35 (64 aa).

This sequence belongs to the bacterial ribosomal protein bL35 family.

The sequence is that of Large ribosomal subunit protein bL35 from Vibrio metschnikovii.